A 466-amino-acid polypeptide reads, in one-letter code: Argininosuccinate lyase 1 (466 aa).

This sequence belongs to the lyase 1 family. Argininosuccinate lyase subfamily.

Its subcellular location is the cytoplasm. It catalyses the reaction 2-(N(omega)-L-arginino)succinate = fumarate + L-arginine. The protein operates within amino-acid biosynthesis; L-arginine biosynthesis; L-arginine from L-ornithine and carbamoyl phosphate: step 3/3. In Agrobacterium fabrum (strain C58 / ATCC 33970) (Agrobacterium tumefaciens (strain C58)), this protein is Argininosuccinate lyase 1.